Reading from the N-terminus, the 330-residue chain is G-protein coupled receptor 3 (330 aa).

At M1–A42 the chain is on the extracellular side. An N-linked (GlcNAc...) asparagine glycan is attached at N20. Residues W43–V62 traverse the membrane as a helical segment. Residues A63 to P74 lie on the Cytoplasmic side of the membrane. A helical transmembrane segment spans residues M75–A98. Residues A99–L110 lie on the Extracellular side of the membrane. A helical transmembrane segment spans residues V111–V132. The Cytoplasmic segment spans residues D133–T153. A helical membrane pass occupies residues Y154–L173. Topologically, residues A174–L198 are extracellular. Residues A199 to C217 form a helical membrane-spanning segment. Over R218 to G245 the chain is Cytoplasmic. The chain crosses the membrane as a helical span at residues I246 to A272. The Extracellular segment spans residues H273 to L277. A helical membrane pass occupies residues Y278–F299. Residues R300–V330 are Cytoplasmic-facing. C313 carries the S-palmitoyl cysteine lipid modification. 3 positions are modified to phosphoserine: S324, S326, and S328.

Belongs to the G-protein coupled receptor 1 family. In terms of tissue distribution, expressed predominantly in the central nervous system, and at low levels in the lung, kidney, testis, ovary and eye. Highly expressed in regions of the brain implicated in the Alzheimer disease.

Its subcellular location is the cell membrane. In terms of biological role, constitutively active G-protein coupled receptor that maintains high 3'-5'-cyclic adenosine monophosphate (cAMP) levels that a plays a role in serveral processes including meiotic arrest in oocytes or neuronal development via activation of numerous intracellular signaling pathways. Acts as an essential activator of thermogenic adipocytes and drives thermogenesis via its intrinsic G(s)-coupling activity without the requirement of a ligand. Has a potential role in modulating a number of brain functions, including behavioral responses to stress, amyloid-beta peptide generation in neurons. Stimulates neurite outgrowth in cerebellar granular neurons modulated via PKA, ERK, and most strongly PI3K-mediated signaling pathways. This is G-protein coupled receptor 3 (GPR3) from Homo sapiens (Human).